The primary structure comprises 284 residues: Adenylate kinase 1, chloroplastic (284 aa).

Residues 1–36 (MARLVRVARSSSLFGFGNRFYSTSAEASHASSPSPF) constitute a chloroplast transit peptide. 61-66 (GVGKGT) contacts ATP. An NMP region spans residues 81–110 (ATGDLVREELASSGPLSQKLSEIVNQGKLV). Residues Thr-82, Arg-87, 108–110 (KLV), 138–141 (GFPR), and Gln-145 contribute to the AMP site. The segment at 174-222 (GRRTCSQCGKGFNVAHINLKGENGRPGISMDPLLPPHQCMSKLVTRADD) is LID. Arg-175 is a binding site for ATP. AMP contacts are provided by Arg-219 and Arg-230. Position 258 (Gly-258) interacts with ATP.

It belongs to the adenylate kinase family. In terms of assembly, monomer. Highly expressed in flowers and at lower levels in roots, leaves and stems.

It is found in the plastid. It localises to the chloroplast stroma. The enzyme catalyses AMP + ATP = 2 ADP. Catalyzes the reversible transfer of the terminal phosphate group between ATP and AMP. Plays an important role in cellular energy homeostasis, adenine nucleotide metabolism and plant growth. The protein is Adenylate kinase 1, chloroplastic (ADK) of Arabidopsis thaliana (Mouse-ear cress).